The following is a 404-amino-acid chain: F-box protein At2g17036 (404 aa).

The F-box domain maps to 2-50 (MDWATLPKDLLDLISKCLESSFDLIQFRSVCSSWRSAAGPKRLLWAHNL).

The chain is F-box protein At2g17036 from Arabidopsis thaliana (Mouse-ear cress).